We begin with the raw amino-acid sequence, 79 residues long: Protein OPG081 (79 aa).

Residues 1–3 lie on the Intravirion side of the membrane; the sequence is MAD. The chain crosses the membrane as a helical span at residues 4 to 24; the sequence is AITVLTAIGITVLMLLMVISG. Over 25-47 the chain is Virion surface; sequence TAMIVKELNPNDIFTMQSLKFNR. A helical transmembrane segment spans residues 48 to 68; sequence AVTIFKYIGLFIYIPGTIILY. The Intravirion portion of the chain corresponds to 69 to 79; that stretch reads ATYIKSLLMKS.

Belongs to the orthopoxvirus OPG081 family.

It is found in the virion membrane. Envelope protein. This chain is Protein OPG081 (OPG081), found in Variola virus.